A 224-amino-acid chain; its full sequence is 7-cyano-7-deazaguanine synthase (224 aa).

Position 12–22 (leucine 12–threonine 22) interacts with ATP. The Zn(2+) site is built by cysteine 193, cysteine 201, cysteine 204, and cysteine 207.

It belongs to the QueC family. The cofactor is Zn(2+).

The catalysed reaction is 7-carboxy-7-deazaguanine + NH4(+) + ATP = 7-cyano-7-deazaguanine + ADP + phosphate + H2O + H(+). It participates in purine metabolism; 7-cyano-7-deazaguanine biosynthesis. Functionally, catalyzes the ATP-dependent conversion of 7-carboxy-7-deazaguanine (CDG) to 7-cyano-7-deazaguanine (preQ(0)). The sequence is that of 7-cyano-7-deazaguanine synthase from Prochlorococcus marinus (strain MIT 9215).